A 344-amino-acid polypeptide reads, in one-letter code: Ketol-acid reductoisomerase (NADP(+)) (344 aa).

Positions 2-181 (EKIYYDADIS…GAGRAGILTT (180 aa)) constitute a KARI N-terminal Rossmann domain. NADP(+) is bound by residues 25 to 28 (YGSQ), Arg-48, Ser-52, and 82 to 85 (DERQ). His-107 is a catalytic residue. Gly-133 serves as a coordination point for NADP(+). Residues 182 to 327 (TFREETETDL…RKLRSMMPFI (146 aa)) enclose the KARI C-terminal knotted domain. Residues Asp-190, Glu-194, Glu-226, and Glu-230 each coordinate Mg(2+). Substrate is bound at residue Ser-251.

The protein belongs to the ketol-acid reductoisomerase family. Requires Mg(2+) as cofactor.

It carries out the reaction (2R)-2,3-dihydroxy-3-methylbutanoate + NADP(+) = (2S)-2-acetolactate + NADPH + H(+). The catalysed reaction is (2R,3R)-2,3-dihydroxy-3-methylpentanoate + NADP(+) = (S)-2-ethyl-2-hydroxy-3-oxobutanoate + NADPH + H(+). It participates in amino-acid biosynthesis; L-isoleucine biosynthesis; L-isoleucine from 2-oxobutanoate: step 2/4. It functions in the pathway amino-acid biosynthesis; L-valine biosynthesis; L-valine from pyruvate: step 2/4. Involved in the biosynthesis of branched-chain amino acids (BCAA). Catalyzes an alkyl-migration followed by a ketol-acid reduction of (S)-2-acetolactate (S2AL) to yield (R)-2,3-dihydroxy-isovalerate. In the isomerase reaction, S2AL is rearranged via a Mg-dependent methyl migration to produce 3-hydroxy-3-methyl-2-ketobutyrate (HMKB). In the reductase reaction, this 2-ketoacid undergoes a metal-dependent reduction by NADPH to yield (R)-2,3-dihydroxy-isovalerate. The chain is Ketol-acid reductoisomerase (NADP(+)) from Alicyclobacillus acidocaldarius subsp. acidocaldarius (strain ATCC 27009 / DSM 446 / BCRC 14685 / JCM 5260 / KCTC 1825 / NBRC 15652 / NCIMB 11725 / NRRL B-14509 / 104-IA) (Bacillus acidocaldarius).